The primary structure comprises 96 residues: SPbeta prophage-derived uncharacterized protein YosV (96 aa).

This Bacillus subtilis (strain 168) protein is SPbeta prophage-derived uncharacterized protein YosV (yosV).